A 426-amino-acid chain; its full sequence is Dihydroorotase (426 aa).

The Zn(2+) site is built by His59 and His61. Substrate contacts are provided by residues 61–63 (HLR) and Asn93. Positions 151, 178, and 232 each coordinate Zn(2+). Asn279 contributes to the substrate binding site. Asp306 is a binding site for Zn(2+). Residue Asp306 is part of the active site. Residues His310 and 324-325 (FG) contribute to the substrate site.

It belongs to the metallo-dependent hydrolases superfamily. DHOase family. Class I DHOase subfamily. The cofactor is Zn(2+).

The enzyme catalyses (S)-dihydroorotate + H2O = N-carbamoyl-L-aspartate + H(+). Its pathway is pyrimidine metabolism; UMP biosynthesis via de novo pathway; (S)-dihydroorotate from bicarbonate: step 3/3. Functionally, catalyzes the reversible cyclization of carbamoyl aspartate to dihydroorotate. The protein is Dihydroorotase of Brevibacillus brevis (strain 47 / JCM 6285 / NBRC 100599).